We begin with the raw amino-acid sequence, 125 residues long: Small ribosomal subunit protein eS8 (125 aa).

Belongs to the eukaryotic ribosomal protein eS8 family. In terms of assembly, part of the 30S ribosomal subunit.

The protein is Small ribosomal subunit protein eS8 of Methanocella arvoryzae (strain DSM 22066 / NBRC 105507 / MRE50).